Reading from the N-terminus, the 149-residue chain is 3-dehydroquinate dehydratase (149 aa).

The active-site Proton acceptor is the Y26. Residues N78, H84, and D91 each coordinate substrate. The Proton donor role is filled by H104. Substrate is bound by residues I105–S106 and R115.

It belongs to the type-II 3-dehydroquinase family. In terms of assembly, homododecamer.

It carries out the reaction 3-dehydroquinate = 3-dehydroshikimate + H2O. It participates in metabolic intermediate biosynthesis; chorismate biosynthesis; chorismate from D-erythrose 4-phosphate and phosphoenolpyruvate: step 3/7. Its function is as follows. Catalyzes a trans-dehydration via an enolate intermediate. This is 3-dehydroquinate dehydratase (aroQ) from Buchnera aphidicola subsp. Schizaphis graminum (strain Sg).